Reading from the N-terminus, the 1264-residue chain is P-type sodium-transporting ATPase4 (1264 aa).

Residues 1-12 show a composition bias toward polar residues; sequence MSSQNNNKQGGQ. The disordered stretch occupies residues 1–102; it reads MSSQNNNKQG…INGEKNDDNN (102 aa). 2 stretches are compositionally biased toward basic and acidic residues: residues 15–42 and 50–64; these read NNKK…DELN and NDMK…KKNE. 8 consecutive transmembrane segments (helical) span residues 165–185, 186–206, 359–379, 393–413, 923–943, 1006–1026, 1203–1223, and 1226–1246; these read VWLI…LVAA, VASL…IVTL, GLIG…AVII, FVII…GLPM, FVCF…VAIV, IFEA…CTGF, CSIS…TSIL, and TCLL…NLFL.

The protein belongs to the cation transport ATPase (P-type) (TC 3.A.3) family.

Its subcellular location is the cell membrane. The catalysed reaction is Na(+)(in) + ATP + H2O = Na(+)(out) + ADP + phosphate + H(+). With respect to regulation, inhibited by cipargamin and other spiroindolone compounds. Inhibited by 4-cyano-3-methylisoquinoline derivatives MB14 and MB10 but not RK18. Inhibited by (+)-SJ733, a dihydroisoquinolone compound. Functionally, sodium-exporting ATPase. Required for the extrusion of Na(+) from the intraerythrocytic parasites to maintain a low cytosolic concentration of Na(+). The polypeptide is P-type sodium-transporting ATPase4 (Plasmodium falciparum (isolate 3D7)).